Here is a 319-residue protein sequence, read N- to C-terminus: Epoxyqueuosine reductase (319 aa).

Aspartate 128 serves as the catalytic Proton donor. Residues 173 to 202 enclose the 4Fe-4S ferredoxin-type domain; the sequence is EANDPHPNYCGTCTRCLSACPTAALVEPAV. Residues cysteine 182, cysteine 185, cysteine 188, cysteine 192, cysteine 208, cysteine 236, cysteine 239, and cysteine 243 each contribute to the [4Fe-4S] cluster site.

The protein belongs to the QueG family. Monomer. Cob(II)alamin serves as cofactor. The cofactor is [4Fe-4S] cluster.

It localises to the cytoplasm. The enzyme catalyses epoxyqueuosine(34) in tRNA + AH2 = queuosine(34) in tRNA + A + H2O. The protein operates within tRNA modification; tRNA-queuosine biosynthesis. In terms of biological role, catalyzes the conversion of epoxyqueuosine (oQ) to queuosine (Q), which is a hypermodified base found in the wobble positions of tRNA(Asp), tRNA(Asn), tRNA(His) and tRNA(Tyr). The sequence is that of Epoxyqueuosine reductase from Gloeobacter violaceus (strain ATCC 29082 / PCC 7421).